Reading from the N-terminus, the 375-residue chain is GDSL esterase/lipase At5g45960 (375 aa).

Residues 1-28 (MRSHHRHFSSYVSFILFLFLFFISFSSS) form the signal peptide. Serine 54 functions as the Nucleophile in the catalytic mechanism. The N-linked (GlcNAc...) asparagine glycan is linked to asparagine 340. Catalysis depends on residues aspartate 348 and histidine 351.

This sequence belongs to the 'GDSL' lipolytic enzyme family.

The protein resides in the secreted. The chain is GDSL esterase/lipase At5g45960 from Arabidopsis thaliana (Mouse-ear cress).